Reading from the N-terminus, the 871-residue chain is DNA mismatch repair protein MutS (871 aa).

617–624 (GPNMGGKS) provides a ligand contact to ATP.

Belongs to the DNA mismatch repair MutS family.

Its function is as follows. This protein is involved in the repair of mismatches in DNA. It is possible that it carries out the mismatch recognition step. This protein has a weak ATPase activity. The protein is DNA mismatch repair protein MutS of Hydrogenovibrio crunogenus (strain DSM 25203 / XCL-2) (Thiomicrospira crunogena).